The primary structure comprises 475 residues: Glycogen synthase (475 aa).

Lysine 15 contributes to the ADP-alpha-D-glucose binding site.

This sequence belongs to the glycosyltransferase 1 family. Bacterial/plant glycogen synthase subfamily.

It catalyses the reaction [(1-&gt;4)-alpha-D-glucosyl](n) + ADP-alpha-D-glucose = [(1-&gt;4)-alpha-D-glucosyl](n+1) + ADP + H(+). It participates in glycan biosynthesis; glycogen biosynthesis. Functionally, synthesizes alpha-1,4-glucan chains using ADP-glucose. The protein is Glycogen synthase of Anaeromyxobacter dehalogenans (strain 2CP-C).